The following is a 238-amino-acid chain: uncharacterized protein (238 aa).

This sequence belongs to the HyuE racemase family.

This is an uncharacterized protein from Schizosaccharomyces pombe (strain 972 / ATCC 24843) (Fission yeast).